The chain runs to 245 residues: Adenylate kinase (245 aa).

15–20 (GSGKGT) serves as a coordination point for ATP. Residues 35 to 64 (SSGDLLRDAVSKDTPLSQEIKSYLDQGKLL) are NMP. AMP-binding positions include Ser-36, Arg-41, 62–64 (KLL), 103–106 (GFPR), and Gln-110. Residues 143–176 (SRYICPACQGIYNEQQGFSSCPKCSVELIRRSDD) form an LID region. An ATP-binding site is contributed by Arg-144. Residues Cys-147 and Cys-150 each coordinate Zn(2+). 153-154 (IY) contacts ATP. Zn(2+) contacts are provided by Cys-163 and Cys-166. Positions 173 and 184 each coordinate AMP. Ala-212 lines the ATP pocket.

The protein belongs to the adenylate kinase family. Monomer.

Its subcellular location is the cytoplasm. It carries out the reaction AMP + ATP = 2 ADP. It participates in purine metabolism; AMP biosynthesis via salvage pathway; AMP from ADP: step 1/1. Functionally, catalyzes the reversible transfer of the terminal phosphate group between ATP and AMP. Plays an important role in cellular energy homeostasis and in adenine nucleotide metabolism. The sequence is that of Adenylate kinase from Chlamydia trachomatis serovar A (strain ATCC VR-571B / DSM 19440 / HAR-13).